A 545-amino-acid polypeptide reads, in one-letter code: MAKILSFSDDARHQLEHGVNALADAVKVTLGPRGRNVVLDKKFGAPTITNDGVTIAKEIELTNPYENLGAQLVKEVATKTNDVAGDGTTTATVLAQALVREGLRNVAAGANPTGLKRGIDAAATKVSEELLGKAVDVSDKAAIAHVATVSAQDSTIGELIAEAMERVGRDGVITVEEGSTLATELDVTEGLQFDKGFISPNFVTDAEGQESVLEDAYILITTQKISAIEELLPLLEKVLQESKPLLIIAEDVEGQALSTLVVNALRKTMKVCAVKAPGFGDRRKAMLQDMAILTGAELVAPELGYKLDQVGLEVLGTARRVVVDKENTTIVDGGGQASDAEDRVAQIRKEIEASDSEWDREKLAERLAKLSGGIAVIRAGAATEVEMKERKHRIEDAIAATKAAVEEGTVPGGGAALAQVLPALDGDLGLTGDEQVGVSIVRKALIEPLRWIAQNAGHDGYVVVQKVAGKDWGHGLDAATGEYVDLAKAGILDPVKVTRNAVANAASIAGLLLTTESLVVEKPQEPEPAAAGHGHGHGHQHGPGF.

ATP contacts are provided by residues T29 to P32, D86 to T90, G413, D477 to A479, and D493. Positions P526–F545 are disordered. Residues G534–F545 are compositionally biased toward basic residues.

The protein belongs to the chaperonin (HSP60) family. In terms of assembly, forms a cylinder of 14 subunits composed of two heptameric rings stacked back-to-back. Interacts with the co-chaperonin GroES.

It is found in the cytoplasm. The enzyme catalyses ATP + H2O + a folded polypeptide = ADP + phosphate + an unfolded polypeptide.. Together with its co-chaperonin GroES, plays an essential role in assisting protein folding. The GroEL-GroES system forms a nano-cage that allows encapsulation of the non-native substrate proteins and provides a physical environment optimized to promote and accelerate protein folding. The sequence is that of Chaperonin GroEL 2 from Salinispora arenicola (strain CNS-205).